Consider the following 296-residue polypeptide: 33 kDa chaperonin (296 aa).

Cystine bridges form between Cys237–Cys239 and Cys270–Cys273.

This sequence belongs to the HSP33 family. In terms of processing, under oxidizing conditions two disulfide bonds are formed involving the reactive cysteines. Under reducing conditions zinc is bound to the reactive cysteines and the protein is inactive.

It localises to the cytoplasm. Its function is as follows. Redox regulated molecular chaperone. Protects both thermally unfolding and oxidatively damaged proteins from irreversible aggregation. Plays an important role in the bacterial defense system toward oxidative stress. In Acetivibrio thermocellus (strain ATCC 27405 / DSM 1237 / JCM 9322 / NBRC 103400 / NCIMB 10682 / NRRL B-4536 / VPI 7372) (Clostridium thermocellum), this protein is 33 kDa chaperonin.